A 100-amino-acid polypeptide reads, in one-letter code: uncharacterized protein (100 aa).

This is an uncharacterized protein from Lactuca sativa (Garden lettuce).